The chain runs to 433 residues: GTPase Obg (433 aa).

Residues 1 to 159 form the Obg domain; the sequence is MGLTDYCECR…LHVSLEIKYL (159 aa). The OBG-type G domain occupies 160 to 329; that stretch reads ANVGIVGFPN…LVAQVFALHQ (170 aa). Residues 166-173, 191-195, 212-215, 282-285, and 310-312 each bind GTP; these read GFPNTGKS, FTTLV, DIPG, NKTD, and ISA. Residues Ser173 and Thr193 each contribute to the Mg(2+) site. The OCT domain occupies 355 to 433; that stretch reads ASETDHDPLN…FAGQEFVIND (79 aa).

The protein belongs to the TRAFAC class OBG-HflX-like GTPase superfamily. OBG GTPase family. In terms of assembly, monomer. The cofactor is Mg(2+).

The protein localises to the cytoplasm. An essential GTPase which binds GTP, GDP and possibly (p)ppGpp with moderate affinity, with high nucleotide exchange rates and a fairly low GTP hydrolysis rate. Plays a role in control of the cell cycle, stress response, ribosome biogenesis and in those bacteria that undergo differentiation, in morphogenesis control. The sequence is that of GTPase Obg from Mycoplasma pneumoniae (strain ATCC 29342 / M129 / Subtype 1) (Mycoplasmoides pneumoniae).